The primary structure comprises 211 residues: Xanthine phosphoribosyltransferase (211 aa).

L31 and N38 together coordinate xanthine. 138–142 (ANGRT) is a binding site for 5-phospho-alpha-D-ribose 1-diphosphate. K166 provides a ligand contact to xanthine.

This sequence belongs to the purine/pyrimidine phosphoribosyltransferase family. Xpt subfamily. Homodimer.

The protein localises to the cytoplasm. It catalyses the reaction XMP + diphosphate = xanthine + 5-phospho-alpha-D-ribose 1-diphosphate. The protein operates within purine metabolism; XMP biosynthesis via salvage pathway; XMP from xanthine: step 1/1. Functionally, converts the preformed base xanthine, a product of nucleic acid breakdown, to xanthosine 5'-monophosphate (XMP), so it can be reused for RNA or DNA synthesis. The chain is Xanthine phosphoribosyltransferase from Chloroflexus aurantiacus (strain ATCC 29364 / DSM 637 / Y-400-fl).